The following is a 127-amino-acid chain: Glycine cleavage system H protein (127 aa).

The 83-residue stretch at 22-104 folds into the Lipoyl-binding domain; that stretch reads KVRIGITDFA…YEKAWMIVVE (83 aa). Lysine 63 carries the N6-lipoyllysine modification.

It belongs to the GcvH family. In terms of assembly, the glycine cleavage system is composed of four proteins: P, T, L and H. The cofactor is (R)-lipoate.

The glycine cleavage system catalyzes the degradation of glycine. The H protein shuttles the methylamine group of glycine from the P protein to the T protein. In terms of biological role, is also involved in protein lipoylation via its role as an octanoyl/lipoyl carrier protein intermediate. The polypeptide is Glycine cleavage system H protein (Geobacillus sp. (strain WCH70)).